Consider the following 28-residue polypeptide: Cruzioseptin-4 (28 aa).

Glutamic acid 1-amide is present on E25. Positions 27 to 28 (EH) are excised as a propeptide.

Expressed by the skin glands.

It is found in the secreted. Has antimicrobial activity. The polypeptide is Cruzioseptin-4 (Cruziohyla calcarifer (Splendid leaf frog)).